The chain runs to 736 residues: Prolyl 3-hydroxylase 1 (736 aa).

The N-terminal stretch at 1 to 22 is a signal peptide; it reads MAVRALKLLTTLLAVVAAASQA. TPR repeat units follow at residues 35-68, 143-176, 205-238, and 301-334; these read PDLLFAEGTAAYARGDWPGVVLSMERALRSRAAL, RSPYNYLQVAYFKINKLEKAVAAAHTFFVGNPEH, HMQEFRLGVRLYSEEQPQEAVPHLEAALQEYFVA, and PSHYNYLQFAYYNIGNYTQAVECAKTYLLFFPND. Asn-316 is a glycosylation site (N-linked (GlcNAc...) asparagine). Positions 401–439 form a coiled coil; it reads KRLQEKQKSERETAVRISQEIGNLMKEIETLVEEKTKES. N-linked (GlcNAc...) asparagine glycans are attached at residues Asn-467 and Asn-540. The region spanning 564–678 is the Fe2OG dioxygenase domain; it reads SHLVCRTAIE…RCAIALWFTL (115 aa). Fe cation-binding residues include His-587, Asp-589, and His-659. Arg-669 is a catalytic residue. Residues 699–736 are disordered; sequence SPEEMDLSQEQPLDAQQGPPEPAQESLSGSESKPKDEL. Residues 733–736 carry the Prevents secretion from ER motif; the sequence is KDEL.

This sequence belongs to the leprecan family. Fe cation is required as a cofactor. Requires L-ascorbate as cofactor. O-glycosylated; chondroitin sulfate.

The protein resides in the endoplasmic reticulum. It localises to the secreted. The protein localises to the extracellular space. Its subcellular location is the extracellular matrix. The enzyme catalyses L-prolyl-[collagen] + 2-oxoglutarate + O2 = trans-3-hydroxy-L-prolyl-[collagen] + succinate + CO2. Basement membrane-associated chondroitin sulfate proteoglycan (CSPG). Has prolyl 3-hydroxylase activity catalyzing the post-translational formation of 3-hydroxyproline in -Xaa-Pro-Gly- sequences in collagens, especially types IV and V. May be involved in the secretory pathway of cells. Has growth suppressive activity in fibroblasts. The polypeptide is Prolyl 3-hydroxylase 1 (Homo sapiens (Human)).